The following is a 314-amino-acid chain: Porphobilinogen deaminase (314 aa).

Position 249 is an S-(dipyrrolylmethanemethyl)cysteine (C249).

Belongs to the HMBS family. As to quaternary structure, monomer. The cofactor is dipyrromethane.

The catalysed reaction is 4 porphobilinogen + H2O = hydroxymethylbilane + 4 NH4(+). It functions in the pathway porphyrin-containing compound metabolism; protoporphyrin-IX biosynthesis; coproporphyrinogen-III from 5-aminolevulinate: step 2/4. Its function is as follows. Tetrapolymerization of the monopyrrole PBG into the hydroxymethylbilane pre-uroporphyrinogen in several discrete steps. The sequence is that of Porphobilinogen deaminase from Brucella suis biovar 1 (strain 1330).